The following is a 263-amino-acid chain: MSRIEPHAIPPELLLKAYRAGIFPMADSRDDPEVFWVEPKMRAILPLEGFHLSRSLARTLRRGKFTVTCNAAFEAVIDACAAPRPGAEESWISARIRESYIGLHEHGHAHSIECWHNGRLVGGLYGVGFARVFCGESMFSREPDASKVALAWLVASLRKVGAELLDCQFTTPHLASLGAVEIPQSQYLQLLSKAQRPYSSGELAAARALADAVGDGLGIGGAGVVKGDAAALGLPAGFAALRAEGAGSSSPGNVIAQSLTHTS.

It belongs to the L/F-transferase family.

Its subcellular location is the cytoplasm. The catalysed reaction is N-terminal L-lysyl-[protein] + L-leucyl-tRNA(Leu) = N-terminal L-leucyl-L-lysyl-[protein] + tRNA(Leu) + H(+). It carries out the reaction N-terminal L-arginyl-[protein] + L-leucyl-tRNA(Leu) = N-terminal L-leucyl-L-arginyl-[protein] + tRNA(Leu) + H(+). The enzyme catalyses L-phenylalanyl-tRNA(Phe) + an N-terminal L-alpha-aminoacyl-[protein] = an N-terminal L-phenylalanyl-L-alpha-aminoacyl-[protein] + tRNA(Phe). Its function is as follows. Functions in the N-end rule pathway of protein degradation where it conjugates Leu, Phe and, less efficiently, Met from aminoacyl-tRNAs to the N-termini of proteins containing an N-terminal arginine or lysine. This chain is Leucyl/phenylalanyl-tRNA--protein transferase, found in Novosphingobium aromaticivorans (strain ATCC 700278 / DSM 12444 / CCUG 56034 / CIP 105152 / NBRC 16084 / F199).